Reading from the N-terminus, the 336-residue chain is Potassium channel subfamily K member 1 (336 aa).

Topologically, residues 1-20 (MLQSLAGSSCVRLVERHRSA) are cytoplasmic. The chain crosses the membrane as a helical span at residues 21 to 41 (WCFGFLVLGYLLYLVFGAVVF). Topologically, residues 42 to 103 (SSVELPYEDL…SNASGNWNWD (62 aa)) are extracellular. Residue Asn95 is glycosylated (N-linked (GlcNAc...) asparagine). Residues 104–116 (FTSALFFASTVLS) constitute an intramembrane region (helical). An intramembrane segment occupies 117 to 122 (TTGYGH). The tract at residues 117-122 (TTGYGH) is selectivity filter 1. Residues 123 to 132 (TVPLSDGGKA) are Extracellular-facing. Residues 133–156 (FCIIYSVIGIPFTLLFLTAVVQRV) traverse the membrane as a helical segment. Topologically, residues 157–181 (TVHVTRRPVLYFHIRWGFSKQVVAI) are cytoplasmic. Residues 182–202 (VHAVLLGFVTVSCFFFIPAAV) traverse the membrane as a helical segment. At 203-211 (FSVLEDDWN) the chain is on the extracellular side. The segment at residues 212–224 (FLESFYFCFISLS) is an intramembrane region (helical). Residues 225–230 (TIGLGD) form a selectivity filter 2 region. Residues 225-231 (TIGLGDY) lie within the membrane without spanning it. Residues 232-243 (VPGEGYNQKFRE) lie on the Extracellular side of the membrane. Residues 244–267 (LYKIGITCYLLLGLIAMLVVLETF) form a helical membrane-spanning segment. Residues 268–336 (CELHELKKFR…PPYEDGSADH (69 aa)) are Cytoplasmic-facing. A Glycyl lysine isopeptide (Lys-Gly) (interchain with G-Cter in SUMO) cross-link involves residue Lys274. The important for intracellular retention in recycling endosomes stretch occupies residues 293–299 (IMEHDQL). Positions 310–336 (GLKEEQKQSEPFVASQSPPYEDGSADH) are disordered. The residue at position 326 (Ser326) is a Phosphoserine.

The protein belongs to the two pore domain potassium channel (TC 1.A.1.8) family. In terms of assembly, homodimer; disulfide-linked. Heterodimer with KCNK2; disulfide-linked. In astrocytes, forms mostly heterodimeric potassium channels with KCNK2, with only a minor proportion of functional channels containing homodimeric KCNK1. Interacts with KCNK3 and KCNK9, forming functional heterodimeric channels. Interacts with GNG4. Identified in a complex with PSD and ARF6; interacts only with PSD that is bound to ARF6. Interacts with UBE2I. In terms of processing, sumoylation is controversial. Sumoylated by UBE2I. Not sumoylated when expressed in xenopus oocytes or mammalian cells. Sumoylation inactivates the channel, but does not interfere with expression at the cell membrane. Sumoylation of a single subunit is sufficient to silence the dimeric channel. Sumoylation of KCNK1 is sufficient to silence heterodimeric channels formed by KCNK1 and KCNK3 or KCNK9. Desumoylated by SENP1; this activates the channel. Desumoylated by SENP1; this strongly increases halothane-mediated activation of heterodimeric channels formed with KCNK9. SENP1 treatment has no effect. Detected in spiral ganglion neurons. Detected in hippocampus CA1 and CA1 regions and in the molecular layer of the dentate gyrus. Detected on hippocampus astrocytes. Highly expressed in the stria vascularis in the cochlea. Detected in pancreas islet beta cells. Detected in kidney, at brush border membranes in proximal tubules and in cytoplasmic structures in distal convoluted tubules, thick ascending limbs and collecting ducts (at protein level). Widely expressed. Detected in spiral ganglion cells. Highest expression in brain, kidney, thyroid, salivary gland, adrenal gland, prostate, epididymis, uterus, placenta, colon and jejunum. Moderate expression in eyes, pituitary, pancreas, smooth muscle, testis and ovary. Very low levels in lung, aorta, liver, heart, skeletal muscle, thymus and spleen. In the brain, highest expression in cerebellar granule cells, brainstem, hippocampus and cerebral cortex.

The protein resides in the cell membrane. It is found in the recycling endosome. Its subcellular location is the apical cell membrane. It localises to the cytoplasmic vesicle. The protein localises to the perikaryon. The protein resides in the cell projection. It is found in the dendrite. Its subcellular location is the synaptic cell membrane. The enzyme catalyses K(+)(in) = K(+)(out). The catalysed reaction is NH4(+)(in) = NH4(+)(out). It carries out the reaction Na(+)(in) = Na(+)(out). It catalyses the reaction Rb(+)(in) = Rb(+)(out). The enzyme catalyses Cs(+)(in) = Cs(+)(out). The catalysed reaction is Li(+)(in) = Li(+)(out). It carries out the reaction L-glutamate(out) = L-glutamate(in). It catalyses the reaction chloride(in) = chloride(out). With respect to regulation, inhibited by quinine, quinidine, barium, and internal acidification. Functionally, ion channel that contributes to passive transmembrane potassium transport and to the regulation of the resting membrane potential in brain astrocytes, but also in kidney and in other tissues. Forms dimeric channels through which potassium ions pass in accordance with their electrochemical gradient. The channel is selective for K(+) ions at physiological potassium concentrations and at neutral pH, but becomes permeable to Na(+) at subphysiological K(+) levels and upon acidification of the extracellular medium. The homodimer has very low potassium channel activity, when expressed in heterologous systems, and can function as weakly inward rectifying potassium channel. Channel activity is modulated by activation of serotonin receptors. Heterodimeric channels containing KCNK1 and KCNK2 have much higher activity, and may represent the predominant form in astrocytes. Heterodimeric channels containing KCNK1 and KCNK3 or KCNK9 have much higher activity. Heterodimeric channels formed by KCNK1 and KCNK9 may contribute to halothane-sensitive currents. Mediates outward rectifying potassium currents in dentate gyrus granule cells and contributes to the regulation of their resting membrane potential. Contributes to the regulation of action potential firing in dentate gyrus granule cells and down-regulates their intrinsic excitability. In astrocytes, the heterodimer formed by KCNK1 and KCNK2 is required for rapid glutamate release in response to activation of G-protein coupled receptors, such as F2R and CNR1. Required for normal ion and water transport in the kidney. Contributes to the regulation of the resting membrane potential of pancreatic beta cells. The low channel activity of homodimeric KCNK1 may be due to sumoylation. The low channel activity may be due to rapid internalization from the cell membrane and retention in recycling endosomes. Permeable to monovalent cations with ion selectivity for K(+) &gt; Rb(+) &gt;&gt; NH4(+) &gt;&gt; Cs(+) = Na(+) = Li(+). This Mus musculus (Mouse) protein is Potassium channel subfamily K member 1 (Kcnk1).